A 385-amino-acid chain; its full sequence is Flap endonuclease 1 (385 aa).

The N-domain stretch occupies residues 1–104 (MGILGLSKLI…GELAKRAERR (104 aa)). Aspartate 34 contributes to the Mg(2+) binding site. The DNA site is built by arginine 47 and arginine 70. Positions 86, 158, 160, 179, and 181 each coordinate Mg(2+). Residues 122-253 (GIEKFNRRLV…KRAIELINTY (132 aa)) form an I-domain region. Glutamate 158 is a DNA binding site. Glycine 231 and aspartate 233 together coordinate DNA. Residue aspartate 233 coordinates Mg(2+). Residues 336–344 (TQVRLDSFF) are interaction with PCNA. The interval 346–385 (TLPSTPNATNAAKRKADEAKKSANNKKAKTSGGGRGRRPK) is disordered. Residues 368 to 385 (ANNKKAKTSGGGRGRRPK) are compositionally biased toward basic residues.

The protein belongs to the XPG/RAD2 endonuclease family. FEN1 subfamily. As to quaternary structure, interacts with PCNA. Three molecules of FEN1 bind to one PCNA trimer with each molecule binding to one PCNA monomer. PCNA stimulates the nuclease activity without altering cleavage specificity. It depends on Mg(2+) as a cofactor. Post-translationally, phosphorylated. Phosphorylation upon DNA damage induces relocalization to the nuclear plasma.

The protein localises to the nucleus. The protein resides in the nucleolus. It is found in the nucleoplasm. It localises to the mitochondrion. Functionally, structure-specific nuclease with 5'-flap endonuclease and 5'-3' exonuclease activities involved in DNA replication and repair. During DNA replication, cleaves the 5'-overhanging flap structure that is generated by displacement synthesis when DNA polymerase encounters the 5'-end of a downstream Okazaki fragment. It enters the flap from the 5'-end and then tracks to cleave the flap base, leaving a nick for ligation. Also involved in the long patch base excision repair (LP-BER) pathway, by cleaving within the apurinic/apyrimidinic (AP) site-terminated flap. Acts as a genome stabilization factor that prevents flaps from equilibrating into structures that lead to duplications and deletions. Also possesses 5'-3' exonuclease activity on nicked or gapped double-stranded DNA, and exhibits RNase H activity. Also involved in replication and repair of rDNA and in repairing mitochondrial DNA. The protein is Flap endonuclease 1 of Drosophila sechellia (Fruit fly).